Here is a 547-residue protein sequence, read N- to C-terminus: DNA polymerase kappa (547 aa).

The segment at 18–39 (LTIEDDGSSSSDEEATLKRRLA) is disordered. Acidic residues predominate over residues 20–31 (IEDDGSSSSDEE). Positions 132–316 (IVHVDCDAFY…LPVREVSGIG (185 aa)) constitute a UmuC domain. The Mg(2+) site is built by Asp-136 and Asp-226. A UBZ4-type zinc finger spans residues 489–518 (TVPCPVCQKNIENELGILNQHVDLCLNVET). Positions 492, 495, 509, and 513 each coordinate Zn(2+).

In terms of assembly, interacts with hus1 and rad17.

It localises to the cytoplasm. Its subcellular location is the nucleus. It catalyses the reaction DNA(n) + a 2'-deoxyribonucleoside 5'-triphosphate = DNA(n+1) + diphosphate. DNA polymerase specifically involved in DNA repair. Plays an important role in translesion synthesis, where the normal high-fidelity DNA polymerases cannot proceed and DNA synthesis stalls. Has a role in meiosis. The polypeptide is DNA polymerase kappa (mug40) (Schizosaccharomyces pombe (strain 972 / ATCC 24843) (Fission yeast)).